The chain runs to 181 residues: D-lyxose/D-mannose isomerase (181 aa).

Positions 75, 77, 88, and 143 each coordinate Mn(2+).

It belongs to the D-lyxose ketol-isomerase family. As to quaternary structure, homodimer. Requires Mn(2+) as cofactor.

It carries out the reaction D-lyxose = D-xylulose. The enzyme catalyses D-mannose = D-fructose. Its function is as follows. Sugar isomerase that catalyzes the reversible isomerization of D-lyxose to D-xylulose, and D-mannose to D-fructose. Shows optimum activity using D-lyxose as substrate, but can also effectively catalyze the isomerization between D-fructose and D-mannose. This Thermosediminibacter oceani (strain ATCC BAA-1034 / DSM 16646 / JW/IW-1228P) protein is D-lyxose/D-mannose isomerase.